The following is a 201-amino-acid chain: DNA polymerase epsilon subunit C (201 aa).

2 disordered regions span residues 102-165 and 178-201; these read KKRE…KSTR and SALD…STDP. Positions 117 to 144 are enriched in acidic residues; that stretch reads VVIEEPELHEDDGVEEEEEEDEVSEEEE. 2 stretches are compositionally biased toward basic and acidic residues: residues 145 to 164 and 182 to 201; these read PVHN…DKST and VGEH…STDP. Phosphoserine occurs at positions 186, 188, and 189.

In terms of assembly, DNA polymerase epsilon is a heterotetramer consisting of POL2, DPB2, DPB3 and DPB4.

The protein localises to the nucleus. In terms of biological role, as accessory component of the DNA polymerase epsilon (DNA polymerase II) participates in chromosomal DNA replication. It is required during synthesis of the leading and lagging DNA strands at the replication fork and binds at/or near replication origins and moves along DNA with the replication fork. It has 3'-5' proofreading exonuclease activity that correct errors arising during DNA replication. It is also involved in DNA synthesis during DNA repair. In Saccharomyces cerevisiae (strain ATCC 204508 / S288c) (Baker's yeast), this protein is DNA polymerase epsilon subunit C (DPB3).